The sequence spans 464 residues: Siroheme synthase (464 aa).

The interval 1-203 is precorrin-2 dehydrogenase /sirohydrochlorin ferrochelatase; it reads MEFLPLFHNL…GQGAEAERLL (203 aa). NAD(+)-binding positions include 22–23 and 43–44; these read EI and PE. At S128 the chain carries Phosphoserine. Residues 216 to 464 are uroporphyrinogen-III C-methyltransferase; it reads GEVYLVGAGP…AWFEGAQATV (249 aa). P225 is an S-adenosyl-L-methionine binding site. D248 serves as the catalytic Proton acceptor. Catalysis depends on K270, which acts as the Proton donor. S-adenosyl-L-methionine-binding positions include 301–303, I306, 331–332, M383, and G412; these read GGD and TA.

In the N-terminal section; belongs to the precorrin-2 dehydrogenase / sirohydrochlorin ferrochelatase family. The protein in the C-terminal section; belongs to the precorrin methyltransferase family.

It catalyses the reaction uroporphyrinogen III + 2 S-adenosyl-L-methionine = precorrin-2 + 2 S-adenosyl-L-homocysteine + H(+). The catalysed reaction is precorrin-2 + NAD(+) = sirohydrochlorin + NADH + 2 H(+). The enzyme catalyses siroheme + 2 H(+) = sirohydrochlorin + Fe(2+). The protein operates within cofactor biosynthesis; adenosylcobalamin biosynthesis; precorrin-2 from uroporphyrinogen III: step 1/1. Its pathway is cofactor biosynthesis; adenosylcobalamin biosynthesis; sirohydrochlorin from precorrin-2: step 1/1. It participates in porphyrin-containing compound metabolism; siroheme biosynthesis; precorrin-2 from uroporphyrinogen III: step 1/1. It functions in the pathway porphyrin-containing compound metabolism; siroheme biosynthesis; siroheme from sirohydrochlorin: step 1/1. The protein operates within porphyrin-containing compound metabolism; siroheme biosynthesis; sirohydrochlorin from precorrin-2: step 1/1. Its function is as follows. Multifunctional enzyme that catalyzes the SAM-dependent methylations of uroporphyrinogen III at position C-2 and C-7 to form precorrin-2 via precorrin-1. Then it catalyzes the NAD-dependent ring dehydrogenation of precorrin-2 to yield sirohydrochlorin. Finally, it catalyzes the ferrochelation of sirohydrochlorin to yield siroheme. This chain is Siroheme synthase, found in Pseudomonas savastanoi pv. phaseolicola (strain 1448A / Race 6) (Pseudomonas syringae pv. phaseolicola (strain 1448A / Race 6)).